Here is a 523-residue protein sequence, read N- to C-terminus: Dynein regulatory complex subunit 3 (523 aa).

LRR repeat units follow at residues Asp-44–Glu-65, Asn-66–Ala-87, His-88–Val-109, Asn-110–Val-131, and Lys-132–Arg-153. The 39-residue stretch at Asn-166–Lys-204 folds into the LRRCT domain. 2 coiled-coil regions span residues Ser-208–Glu-242 and Met-366–Val-391.

It belongs to the DRC3 family. Component of the nexin-dynein regulatory complex (N-DRC). Interacts with DRC1. Interacts with TCTE1/DRC5. Interacts with DRC7.

Its subcellular location is the cytoplasm. The protein localises to the cytoskeleton. It is found in the cilium axoneme. The protein resides in the cell projection. It localises to the cilium. Its subcellular location is the flagellum axoneme. The protein localises to the flagellum. In terms of biological role, component of the nexin-dynein regulatory complex (N-DRC) a key regulator of ciliary/flagellar motility which maintains the alignment and integrity of the distal axoneme and regulates microtubule sliding in motile axonemes. The chain is Dynein regulatory complex subunit 3 (DRC3) from Homo sapiens (Human).